Consider the following 272-residue polypeptide: Type II secretion system protein C (272 aa).

Topologically, residues 1–16 (MNISKLPPLSPSVIRR) are cytoplasmic. Residues 17-35 (ILFYLLMLLFCQQLAMIFW) form a helical membrane-spanning segment. The Periplasmic segment spans residues 36-272 (RIGLPDNAPV…DIYMEFGGDE (237 aa)).

This sequence belongs to the GSP C family.

The protein localises to the cell inner membrane. In terms of biological role, involved in a type II secretion system (T2SS, formerly general secretion pathway, GSP) for the export of proteins. Required for the translocation of the multiple pectic enzymes. The sequence is that of Type II secretion system protein C (outC) from Dickeya dadantii (strain 3937) (Erwinia chrysanthemi (strain 3937)).